A 348-amino-acid polypeptide reads, in one-letter code: D-fructose 1,6-bisphosphatase class 2/sedoheptulose 1,7-bisphosphatase 2 (348 aa).

The Mn(2+) site is built by Asp33, Glu57, Asp97, and Glu100. Substrate-binding positions include 100–102, Tyr131, 176–178, and 198–200; these read EGT, RER, and DGD. Residue Glu225 participates in Mn(2+) binding.

The protein belongs to the FBPase class 2 family. As to quaternary structure, homotetramer.

The catalysed reaction is beta-D-fructose 1,6-bisphosphate + H2O = beta-D-fructose 6-phosphate + phosphate. It carries out the reaction D-sedoheptulose 1,7-bisphosphate + H2O = D-sedoheptulose 7-phosphate + phosphate. It participates in carbohydrate biosynthesis; Calvin cycle. In terms of biological role, catalyzes the hydrolysis of fructose 1,6-bisphosphate (Fru 1,6-P2) and sedoheptulose 1,7-bisphosphate (Sed 1,7-P2) to fructose 6-phosphate and sedoheptulose 7-phosphate, respectively. The chain is D-fructose 1,6-bisphosphatase class 2/sedoheptulose 1,7-bisphosphatase 2 from Acaryochloris marina (strain MBIC 11017).